Consider the following 110-residue polypeptide: BolA-like protein 3 (110 aa).

It belongs to the BolA/IbaG family. Interacts with NFU1.

It is found in the mitochondrion. Its function is as follows. Acts as a mitochondrial iron-sulfur (Fe-S) cluster assembly factor that facilitates (Fe-S) cluster insertion into a subset of mitochondrial proteins. Probably acts together with NFU1. This Bos taurus (Bovine) protein is BolA-like protein 3 (BOLA3).